A 388-amino-acid polypeptide reads, in one-letter code: 3-oxo-Delta(4,5)-steroid 5-beta-reductase (388 aa).

At S2 the chain carries N-acetylserine. Residues 35–37 (TGI), 63–64 (RR), 81–82 (DV), T105, and Q143 contribute to the NADP(+) site. Active-site residues include K147 and Y178. Residues Y178, I205, and 212–214 (SLM) each bind NADP(+).

The protein belongs to the short-chain dehydrogenases/reductases (SDR) family. Highly divergent. As to quaternary structure, homodimer. As to expression, expressed in roots, stems, leaves, flowers, seeds and siliques. Expressed in the vascular bundles.

It carries out the reaction 5beta-cholestan-3-one + NADP(+) = cholest-4-en-3-one + NADPH + H(+). The catalysed reaction is 4,5beta-dihydrocortisone + NADP(+) = cortisone + NADPH + H(+). Its function is as follows. Involved in vascular strand development. Catalyzes the stereospecific conversion of progesterone to 5-beta-pregnane-3,20-dione. Can use progesterone, testosterone, 21-acetyl cortexone, 2-cyclohexenone, but-1-en-3-one, ethyl acrylate, ethylmethacrylate, cortisone and canarigenone as substrates, lower activity with 3-methyl-2-cyclohexenone and 3,5,5-trimethyl-2-cyclohexenone as substrate, and no activity with canarigenin, canarigenin digitoxoside and pregnenolone. May be involved in the formation of 5-beta phytoecdysteroids. This chain is 3-oxo-Delta(4,5)-steroid 5-beta-reductase (VEP1), found in Arabidopsis thaliana (Mouse-ear cress).